A 341-amino-acid polypeptide reads, in one-letter code: S-adenosylmethionine:tRNA ribosyltransferase-isomerase (341 aa).

This sequence belongs to the QueA family. Monomer.

Its subcellular location is the cytoplasm. It carries out the reaction 7-aminomethyl-7-carbaguanosine(34) in tRNA + S-adenosyl-L-methionine = epoxyqueuosine(34) in tRNA + adenine + L-methionine + 2 H(+). It functions in the pathway tRNA modification; tRNA-queuosine biosynthesis. In terms of biological role, transfers and isomerizes the ribose moiety from AdoMet to the 7-aminomethyl group of 7-deazaguanine (preQ1-tRNA) to give epoxyqueuosine (oQ-tRNA). This is S-adenosylmethionine:tRNA ribosyltransferase-isomerase from Symbiobacterium thermophilum (strain DSM 24528 / JCM 14929 / IAM 14863 / T).